The following is a 1071-amino-acid chain: ATP-dependent helicase/deoxyribonuclease subunit B (1071 aa).

It belongs to the helicase family. AddB/RexB type 2 subfamily. Heterodimer of AddA and RexB. Mg(2+) serves as cofactor.

Its function is as follows. The heterodimer acts as both an ATP-dependent DNA helicase and an ATP-dependent, dual-direction single-stranded exonuclease. Recognizes the chi site generating a DNA molecule suitable for the initiation of homologous recombination. This subunit has 5' -&gt; 3' nuclease activity but not helicase activity. This is ATP-dependent helicase/deoxyribonuclease subunit B from Streptococcus pyogenes serotype M18 (strain MGAS8232).